Consider the following 364-residue polypeptide: Protein L-Myc (364 aa).

3 disordered regions span residues 41–81 (TSPP…HSKG), 111–172 (DRLA…EIDV), and 219–285 (PPES…KRKN). Positions 228 to 245 (ASERGPQEEVLERDAAGE) are enriched in basic and acidic residues. Residues 281-333 (TKRKNHNFLERKRRNDLRSRFLALRDQVPTLASCSKAPKVVILSKALEYLQAL) enclose the bHLH domain. The leucine-zipper stretch occupies residues 333-361 (LVGAEKRMATEKRQLRCRQQQLQKRIAYL).

In terms of assembly, efficient DNA binding requires dimerization with another bHLH protein. Binds DNA as a heterodimer with MAX.

The protein localises to the nucleus. This chain is Protein L-Myc (MYCL), found in Homo sapiens (Human).